Consider the following 304-residue polypeptide: Coenzyme PQQ synthesis protein B (304 aa).

This sequence belongs to the PqqB family.

The protein operates within cofactor biosynthesis; pyrroloquinoline quinone biosynthesis. In terms of biological role, may be involved in the transport of PQQ or its precursor to the periplasm. This is Coenzyme PQQ synthesis protein B from Azoarcus sp. (strain BH72).